A 157-amino-acid chain; its full sequence is NADPH-dependent 7-cyano-7-deazaguanine reductase (157 aa).

Catalysis depends on C56, which acts as the Thioimide intermediate. D63 acts as the Proton donor in catalysis. Residues 78–80 (VES) and 97–98 (HE) each bind substrate.

The protein belongs to the GTP cyclohydrolase I family. QueF type 1 subfamily.

Its subcellular location is the cytoplasm. It carries out the reaction 7-aminomethyl-7-carbaguanine + 2 NADP(+) = 7-cyano-7-deazaguanine + 2 NADPH + 3 H(+). It participates in tRNA modification; tRNA-queuosine biosynthesis. Catalyzes the NADPH-dependent reduction of 7-cyano-7-deazaguanine (preQ0) to 7-aminomethyl-7-deazaguanine (preQ1). This chain is NADPH-dependent 7-cyano-7-deazaguanine reductase, found in Parabacteroides distasonis (strain ATCC 8503 / DSM 20701 / CIP 104284 / JCM 5825 / NCTC 11152).